We begin with the raw amino-acid sequence, 67 residues long: DNA-directed RNA polymerase subunit omega (67 aa).

It belongs to the RNA polymerase subunit omega family. The RNAP catalytic core consists of 2 alpha, 1 beta, 1 beta' and 1 omega subunit. When a sigma factor is associated with the core the holoenzyme is formed, which can initiate transcription.

The enzyme catalyses RNA(n) + a ribonucleoside 5'-triphosphate = RNA(n+1) + diphosphate. Functionally, promotes RNA polymerase assembly. Latches the N- and C-terminal regions of the beta' subunit thereby facilitating its interaction with the beta and alpha subunits. This chain is DNA-directed RNA polymerase subunit omega, found in Legionella pneumophila (strain Paris).